The following is a 322-amino-acid chain: Delta-aminolevulinic acid dehydratase (322 aa).

3 residues coordinate Zn(2+): Cys-120, Cys-122, and Cys-130. Lys-195 acts as the Schiff-base intermediate with substrate in catalysis. 5-aminolevulinate is bound by residues Arg-205 and Arg-217. A Mg(2+)-binding site is contributed by Glu-233. Lys-248 (schiff-base intermediate with substrate) is an active-site residue. 5-aminolevulinate contacts are provided by Ser-274 and Tyr-312.

The protein belongs to the ALAD family. As to quaternary structure, homooctamer. Zn(2+) is required as a cofactor.

It carries out the reaction 2 5-aminolevulinate = porphobilinogen + 2 H2O + H(+). The protein operates within porphyrin-containing compound metabolism; protoporphyrin-IX biosynthesis; coproporphyrinogen-III from 5-aminolevulinate: step 1/4. Its function is as follows. Catalyzes an early step in the biosynthesis of tetrapyrroles. Binds two molecules of 5-aminolevulinate per subunit, each at a distinct site, and catalyzes their condensation to form porphobilinogen. This is Delta-aminolevulinic acid dehydratase (hemB) from Archaeoglobus fulgidus (strain ATCC 49558 / DSM 4304 / JCM 9628 / NBRC 100126 / VC-16).